The chain runs to 91 residues: Small ribosomal subunit protein uS19 (91 aa).

Belongs to the universal ribosomal protein uS19 family.

Protein S19 forms a complex with S13 that binds strongly to the 16S ribosomal RNA. The sequence is that of Small ribosomal subunit protein uS19 from Colwellia psychrerythraea (strain 34H / ATCC BAA-681) (Vibrio psychroerythus).